Here is a 359-residue protein sequence, read N- to C-terminus: Golgi-resident adenosine 3',5'-bisphosphate 3'-phosphatase (359 aa).

Position 1 is an N-acetylmethionine (methionine 1). The Cytoplasmic segment spans residues 1–12; the sequence is MAPMGIRLSPLG. A helical transmembrane segment spans residues 13-33; the sequence is VAVFCLLGLGVLYHLYSGFLA. Residues 34 to 359 lie on the Lumenal side of the membrane; it reads GRFSLFGLGG…LPDLEKTGHK (326 aa). A disordered region spans residues 86–106; it reads ESNVLHEKSKGKTREGAEDKM. The Proton acceptor role is filled by aspartate 110. Glutamate 133, aspartate 174, leucine 176, and aspartate 177 together coordinate Mg(2+). Threonine 179 (proton acceptor) is an active-site residue. 2 residues coordinate AMP: serine 242 and histidine 245. Asparagine 259 carries an N-linked (GlcNAc...) asparagine glycan. Residues glycine 268 and lysine 272 each contribute to the AMP site. Aspartate 300 is a binding site for Mg(2+).

The protein belongs to the inositol monophosphatase superfamily. Mg(2+) serves as cofactor. In terms of processing, contains N-linked glycan resistant to endoglycosydase H.

Its subcellular location is the golgi apparatus. The protein resides in the trans-Golgi network membrane. The catalysed reaction is adenosine 3',5'-bisphosphate + H2O = AMP + phosphate. Its pathway is sulfur metabolism. Strongly inhibited by lithium. Its function is as follows. Exhibits 3'-nucleotidase activity toward adenosine 3',5'-bisphosphate (PAP), namely hydrolyzes adenosine 3',5'-bisphosphate into adenosine 5'-monophosphate (AMP) and a phosphate. May play a role in the formation of skeletal elements derived through endochondral ossification, possibly by clearing adenosine 3',5'-bisphosphate produced by Golgi sulfotransferases during glycosaminoglycan sulfation. Has no activity toward 3'-phosphoadenosine 5'-phosphosulfate (PAPS) or inositol phosphate (IP) substrates including I(1)P, I(1,4)P2, I(1,3,4)P3, I(1,4,5)P3 and I(1,3,4,5)P4. This chain is Golgi-resident adenosine 3',5'-bisphosphate 3'-phosphatase, found in Homo sapiens (Human).